The chain runs to 482 residues: Tektin (482 aa).

Coiled-coil stretches lie at residues 100-129 (CLAEVISEIAELLSTKKRLEERNGKVQAKI), 171-204 (ARAVAQVDREVAQLEAVRAKLEADLRDKTEALRV), 282-324 (RLNE…ALTS), 376-407 (VKVAAVDREIAALDATAAQLESNIADKDDALR), and 441-478 (RTQTLARIRELEASLTSARREREAMESSIRQLRDTMGG). The interval 311–330 (EQARAKGQRSALTSALDDKR) is disordered. The residue at position 462 (arginine 462) is an Asymmetric dimethylarginine.

It belongs to the tektin family. In terms of processing, asymmetrically dimethylated at Arg-462 during flagellum resorption. Probably methylated by PRMT1.

Its subcellular location is the cytoplasm. It localises to the cytoskeleton. It is found in the flagellum axoneme. The protein resides in the flagellum basal body. Structural component of ciliary and flagellar microtubules. Plays a key role in the assembly or attachment of the inner dynein arm to microtubules in flagella and cilia. Forms filamentous polymers in the walls of ciliary and flagellar microtubules. The chain is Tektin from Chlamydomonas reinhardtii (Chlamydomonas smithii).